Reading from the N-terminus, the 460-residue chain is Proline--tRNA ligase (460 aa).

Belongs to the class-II aminoacyl-tRNA synthetase family. ProS type 3 subfamily. In terms of assembly, homodimer.

Its subcellular location is the cytoplasm. It carries out the reaction tRNA(Pro) + L-proline + ATP = L-prolyl-tRNA(Pro) + AMP + diphosphate. Functionally, catalyzes the attachment of proline to tRNA(Pro) in a two-step reaction: proline is first activated by ATP to form Pro-AMP and then transferred to the acceptor end of tRNA(Pro). The protein is Proline--tRNA ligase of Methanococcus maripaludis (strain C5 / ATCC BAA-1333).